Reading from the N-terminus, the 116-residue chain is Putative transmembrane protein ORF116 (116 aa).

3 consecutive transmembrane segments (helical) span residues 20–40 (IVTL…AYAL), 53–73 (LLGG…TNSI), and 76–96 (FRGA…DVIN).

Its subcellular location is the host membrane. The sequence is that of Putative transmembrane protein ORF116 from Acidianus bottle-shaped virus (isolate Italy/Pozzuoli) (ABV).